The chain runs to 692 residues: Junctophilin-2 (692 aa).

At 1-670 the chain is on the cytoplasmic side; it reads MSGGRFDFDD…EVEVEEVPNT (670 aa). MORN repeat units follow at residues 14-36, 38-59, 60-79, 82-104, 106-128, and 129-151; these read YCGG…KGQG, YSGS…SGNT, FEGY…TKGR, YKGE…NSGA, YEGT…DGGT, and YQGQ…PYGM. A phosphoserine mark is found at Ser-162 and Ser-165. Disordered stretches follow at residues 164–190 and 246–273; these read SSLR…LPLP and LSSG…AAPF. MORN repeat units follow at residues 285–307 and 308–330; these read YMGE…SGLR and YEGE…DGHR. Residues 345–359 carry the Bipartite nuclear localization signal motif; sequence KRRVLPLKSNKVRQK. A disordered region spans residues 439-661; sequence NSESLLEPRE…KEVAQEAEAE (223 aa). Residues Ser-440, Ser-442, and Ser-462 each carry the phosphoserine modification. Positions 457-471 are enriched in basic and acidic residues; sequence ERPRESPQLHERETP. At Thr-470 the chain carries Phosphothreonine. Over residues 474-487 the composition is skewed to pro residues; it reads EGGPPSPAGTPPQP. Ser-479 is subject to Phosphoserine. Thr-483 is subject to Phosphothreonine. The Nuclear localization signal signature appears at 488 to 492; the sequence is KRPRP. A phosphoserine mark is found at Ser-527 and Ser-533. The span at 573 to 582 shows a compositional bias: acidic residues; sequence PLEDEPEPEP. 4 positions are modified to phosphoserine: Ser-589, Ser-593, Ser-604, and Ser-609. The span at 627–640 shows a compositional bias: basic and acidic residues; that stretch reads AEPKAKARKTEARG. Residues 671-691 traverse the membrane as a helical; Anchor for type IV membrane protein segment; it reads VLICMVILLNIGLAILFVHLL.

Belongs to the junctophilin family. In terms of assembly, interacts with TRPC3. Interacts with BAG5 and HSPA8; the interaction with HSPA8 is increased in the presence of BAG5. Junctophilin-2 N-terminal fragment: Interacts with MEF2C. Post-translationally, proteolytically cleaved by calpain in response to cardiac stress. The major cleavage site takes place at the C-terminus and leads to the release of the Junctophilin-2 N-terminal fragment chain (JP2NT). Phosphorylation on Ser-165, probably by PKC, affects RYR1-mediated calcium ion release, interaction with TRPC3, and skeletal muscle myotubule development.

It is found in the cell membrane. It localises to the sarcoplasmic reticulum membrane. The protein localises to the endoplasmic reticulum membrane. Its subcellular location is the nucleus. Membrane-binding protein that provides a structural bridge between the plasma membrane and the sarcoplasmic reticulum and is required for normal excitation-contraction coupling in cardiomyocytes. Provides a structural foundation for functional cross-talk between the cell surface and intracellular Ca(2+) release channels by maintaining the 12-15 nm gap between the sarcolemma and the sarcoplasmic reticulum membranes in the cardiac dyads. Necessary for proper intracellular Ca(2+) signaling in cardiac myocytes via its involvement in ryanodine receptor-mediated calcium ion release. Contributes to the construction of skeletal muscle triad junctions. Its function is as follows. Transcription repressor required to safeguard against the deleterious effects of cardiac stress. Generated following cleavage of the Junctophilin-2 chain by calpain in response to cardiac stress in cardiomyocytes. Following cleavage and release from the membrane, translocates to the nucleus, binds DNA and represses expression of genes implicated in cell growth and differentiation, hypertrophy, inflammation and fibrosis. Modifies the transcription profile and thereby attenuates pathological remodeling in response to cardiac stress. Probably acts by competing with MEF2 transcription factors and TATA-binding proteins. This is Junctophilin-2 from Rattus norvegicus (Rat).